The following is a 222-amino-acid chain: V-type ATP synthase subunit D (222 aa).

It belongs to the V-ATPase D subunit family.

Its function is as follows. Produces ATP from ADP in the presence of a proton gradient across the membrane. The protein is V-type ATP synthase subunit D of Deinococcus geothermalis (strain DSM 11300 / CIP 105573 / AG-3a).